The sequence spans 914 residues: WAG22 antigen (914 aa).

A PE domain is found at 1 to 93 (MSFVIAVPET…GGAYAAAEAA (93 aa)). Disordered stretches follow at residues 412–431 (GGSG…AGGA) and 895–914 (AGAG…HGLT). Residues 895–904 (AGAGGAGGLV) show a composition bias toward gly residues.

It belongs to the mycobacterial PE family. PGRS subfamily.

This Mycobacterium bovis (strain ATCC BAA-935 / AF2122/97) protein is WAG22 antigen (wag22).